A 125-amino-acid chain; its full sequence is uncharacterized protein (125 aa).

The next 3 helical transmembrane spans lie at 20–42, 57–76, and 81–103; these read RNGGGTLVVAFAFTAFFSLLTIL, LMNAFVLGTITATFAKGVVV, and YLFVASLLAAAFSVLMILVYMAS.

It is found in the cell membrane. This is an uncharacterized protein from Archaeoglobus fulgidus (strain ATCC 49558 / DSM 4304 / JCM 9628 / NBRC 100126 / VC-16).